We begin with the raw amino-acid sequence, 122 residues long: Basic phospholipase A2 vipoxin B chain (122 aa).

7 disulfides stabilise this stretch: Cys26–Cys115, Cys28–Cys44, Cys43–Cys95, Cys49–Cys122, Cys50–Cys88, Cys57–Cys81, and Cys75–Cys86. Residues Tyr27, Gly29, and Gly31 each coordinate Ca(2+). Residue His47 is part of the active site. Residue Asp48 coordinates Ca(2+). Asp89 is a catalytic residue.

This sequence belongs to the phospholipase A2 family. Group II subfamily. D49 sub-subfamily. Heterodimer of A (AC P04084) and B chains; non-covalently linked. The A chain (acidic) is non-toxic, and increases the toxicity of the B chain (basic). The A chain may act as factor stabilizing the complex structure and hence retaining its toxicity by preventing non-specific binding. Upon binding to the target membranes the A chain is postulated to dissociate. Requires Ca(2+) as cofactor. In terms of tissue distribution, expressed by the venom gland.

It is found in the secreted. The catalysed reaction is a 1,2-diacyl-sn-glycero-3-phosphocholine + H2O = a 1-acyl-sn-glycero-3-phosphocholine + a fatty acid + H(+). Functionally, heterodimer: postsynaptic neurotoxin. Monomer: snake venom phospholipase A2 (PLA2) that shows hemolytic activity and inhibition of platelet aggregation. The hemolytic activity occurs only in presence of fatty acids (unsaturated fatty acids facilitate induce a strong hemolytic activity, whereas saturated fatty acids induce a slight activity). The inhibition of platelet aggregation is almost maximal when aggregation is induced by collagen, and arachidonic acid, whereas it is only of 30% when the aggregation is induced by ADP. PLA2 catalyzes the calcium-dependent hydrolysis of the 2-acyl groups in 3-sn-phosphoglycerides. This is Basic phospholipase A2 vipoxin B chain from Vipera ammodytes meridionalis (Eastern sand viper).